Here is a 283-residue protein sequence, read N- to C-terminus: Chromatin modification-related protein png1 (283 aa).

Positions 137–171 (YSPSGASSARQTPAPSRSGASTAGRRRTSATTRGA) are enriched in low complexity. Positions 137–224 (YSPSGASSAR…NEMVSEEDME (88 aa)) are disordered. The segment covering 181-216 (YTASLADSGSTRGQKVSNATATTQLETKADSTTPNE) has biased composition (polar residues). The segment at 228–277 (EKYCFCQQGSYGQMVACDNANCEREWFHMECVGLKAPPEGTWYCEACRDQ) adopts a PHD-type zinc-finger fold. The Zn(2+) site is built by Cys-231, Cys-233, Cys-244, Cys-249, His-255, Cys-258, Cys-271, and Cys-274.

The protein belongs to the ING family. Interacts with H3K4me3 and to a lesser extent with H3K4me2. Component of a histone deacetylase complex.

The protein resides in the nucleus. Functionally, component of a histone deacetylase complex responsible for the deacetylation of lysine residues on the N-terminal part of the core histones (H2A, H2B, H3 and H4). Histone deacetylation gives a tag for epigenetic repression and plays an important role in transcriptional regulation, cell cycle progression and developmental events. Has a role in silencing of mating type genes. This Schizosaccharomyces pombe (strain 972 / ATCC 24843) (Fission yeast) protein is Chromatin modification-related protein png1 (png1).